A 92-amino-acid chain; its full sequence is Small ribosomal subunit protein bS20 (92 aa).

The disordered stretch occupies residues 1–23 (MANTPSAKKRAKQAEKRRSHNAS). Residues 7–20 (AKKRAKQAEKRRSH) show a composition bias toward basic residues.

Belongs to the bacterial ribosomal protein bS20 family.

In terms of biological role, binds directly to 16S ribosomal RNA. The chain is Small ribosomal subunit protein bS20 from Pseudomonas savastanoi pv. phaseolicola (strain 1448A / Race 6) (Pseudomonas syringae pv. phaseolicola (strain 1448A / Race 6)).